Here is a 305-residue protein sequence, read N- to C-terminus: Ribonuclease BN (305 aa).

7 residues coordinate Zn(2+): H64, H66, D68, H69, H141, D212, and H270. The Proton acceptor role is filled by D68.

This sequence belongs to the RNase Z family. RNase BN subfamily. In terms of assembly, homodimer. The cofactor is Zn(2+).

Functionally, zinc phosphodiesterase, which has both exoribonuclease and endoribonuclease activities. The chain is Ribonuclease BN from Escherichia coli O139:H28 (strain E24377A / ETEC).